We begin with the raw amino-acid sequence, 571 residues long: Leiomodin-3 (571 aa).

3 disordered regions span residues 1–29, 46–67, and 91–228; these read MSGHSRNSEQEDTLSEELDEDELLANLSP, PHLPVGMIQKDQTDKAPTGNFN, and PVSF…AKLD. Residues 10–23 show a composition bias toward acidic residues; sequence QEDTLSEELDEDEL. Residues 94–105 show a composition bias toward polar residues; the sequence is FVQSEKNTQNQR. Over residues 119–134 the composition is skewed to basic and acidic residues; that stretch reads LKEKLNSEILAKKRES. Residues 142–179 are compositionally biased toward acidic residues; the sequence is EAEDDDEDEEEEEEDDEDEEEEEEDEEDDEGEEDEDGE. Residues 180-192 are compositionally biased toward basic and acidic residues; the sequence is QANREKNDAKEQI. The segment covering 193–204 has biased composition (polar residues); sequence HNNPGTYQQLAT. The segment covering 206–228 has biased composition (basic and acidic residues); sequence TAHEQKDTSETKEKGEKKIAKLD. A coiled-coil region spans residues 397–436; that stretch reads VTNLLTRNQDKRRQKRQEEQQQQQLKEQRKLIAMLENGLG. Residues 545-564 form the WH2 domain; it reads PRDQLLNDIRHSNVAYLKPV.

It belongs to the tropomodulin family. In terms of assembly, may interact with tropomyosin alpha (TPM1/2) N-terminus. Interacts with KLHL40; leading to stabilization. Post-translationally, ubiquitinated, leading to its degradation. Interaction with KLHL40 negatively regulates ubiquitination and degradation. As to expression, skeletal muscle and heart-specific (at protein level).

It is found in the cytoplasm. It localises to the myofibril. The protein resides in the sarcomere. Its subcellular location is the a band. The protein localises to the m line. It is found in the cytoskeleton. Its function is as follows. Essential for the organization of sarcomeric actin thin filaments in skeletal muscle. Increases the rate of actin polymerization. The sequence is that of Leiomodin-3 from Mus musculus (Mouse).